The sequence spans 651 residues: DNA ligase (651 aa).

NAD(+)-binding positions include 32-36 (DAEYD), 75-76 (SL), and Glu-106. Lys-108 (N6-AMP-lysine intermediate) is an active-site residue. The NAD(+) site is built by Arg-129, Glu-164, Lys-271, and Lys-295. Zn(2+) contacts are provided by Cys-389, Cys-392, Cys-405, and Cys-411. A BRCT domain is found at 575–651 (SSDSFLNNKI…LDEEQWNRLC (77 aa)).

Belongs to the NAD-dependent DNA ligase family. LigA subfamily. It depends on Mg(2+) as a cofactor. Requires Mn(2+) as cofactor.

The enzyme catalyses NAD(+) + (deoxyribonucleotide)n-3'-hydroxyl + 5'-phospho-(deoxyribonucleotide)m = (deoxyribonucleotide)n+m + AMP + beta-nicotinamide D-nucleotide.. Its function is as follows. DNA ligase that catalyzes the formation of phosphodiester linkages between 5'-phosphoryl and 3'-hydroxyl groups in double-stranded DNA using NAD as a coenzyme and as the energy source for the reaction. It is essential for DNA replication and repair of damaged DNA. In Wolbachia pipientis subsp. Culex pipiens (strain wPip), this protein is DNA ligase.